The following is a 434-amino-acid chain: Ribosomal protein uS12 methylthiotransferase RimO (434 aa).

In terms of domain architecture, MTTase N-terminal spans 1–107 (MHLGCEKNLV…ILNVLQRIEQ (107 aa)). Positions 5, 41, 70, 145, 149, and 152 each coordinate [4Fe-4S] cluster. The Radical SAM core domain occupies 131 to 360 (TTGKAVAYLK…ISIQQPIAEL (230 aa)). A TRAM domain is found at 363–434 (QNWIGRTVDV…DLYDLTGQVV (72 aa)).

It belongs to the methylthiotransferase family. RimO subfamily. The cofactor is [4Fe-4S] cluster.

The protein resides in the cytoplasm. The enzyme catalyses L-aspartate(89)-[ribosomal protein uS12]-hydrogen + (sulfur carrier)-SH + AH2 + 2 S-adenosyl-L-methionine = 3-methylsulfanyl-L-aspartate(89)-[ribosomal protein uS12]-hydrogen + (sulfur carrier)-H + 5'-deoxyadenosine + L-methionine + A + S-adenosyl-L-homocysteine + 2 H(+). In terms of biological role, catalyzes the methylthiolation of an aspartic acid residue of ribosomal protein uS12. The polypeptide is Ribosomal protein uS12 methylthiotransferase RimO (Prochlorococcus marinus (strain SARG / CCMP1375 / SS120)).